The following is a 536-amino-acid chain: MSNKNNLRYALGALALSVSAASLAAPSEAQQFTEFWTPGKPNPSICKSPLLVSTPLGLPRCLQASNVVKRLQKLEDIASLNDGNRAAATPGYQASVDYVKQTLQKAGYKVSVQPFPFTAYYPKGPGSLSATVPQPVTYEWEKDFTYLSQTEAGDVTAKVVPVDLSLGAGNTSTSGCEAEDFANFPAGSIALIQRGTCNFEQKAENAAAAGAAGVIIFNQGNTDDRKGLENVTVGESYEGGIPVIFATYDNGVAWSQTPDLQLHLVVDVVRKKTETYNVVAETRRGNPNNVVMVGAHLDSVFEGPGINDNGSGSAAQLEMAVLLAKALPVNKVRFAWWGAEEAGLVGSTHYVQNLAPEEKKKIKAYLNFDMIGSPNFGNFIYDGDGSDFGLQGPPGSAAIERLFEAYFRLRGQQSEGTEIDFRSDYAEFFNSGIAFGGLFTGAEGLKTEEQAQKYGGTAGKAYDECYHSKCDGIANINQDALEIHSDAMAFVTSWLSLSTKVVDDEIAAAGQKAQSRSLQMQKSASQIERWGHDFIK.

Residues 1–24 form the signal peptide; sequence MSNKNNLRYALGALALSVSAASLA. The region spanning 152–255 is the PA domain; that stretch reads AGDVTAKVVP…ATYDNGVAWS (104 aa). At Thr-196 the chain carries Phosphothreonine. Residues His-296 and Asp-308 each contribute to the Zn(2+) site. Glu-340 functions as the Proton acceptor in the catalytic mechanism. Residues Glu-341, Asp-369, and His-467 each coordinate Zn(2+). Cys-465 and Cys-470 are oxidised to a cystine.

This sequence belongs to the peptidase M28 family. M28A subfamily. The cofactor is Zn(2+).

Its subcellular location is the secreted. The enzyme catalyses Release of an N-terminal amino acid, Xaa-|-Yaa-, in which Xaa is preferably Leu, but may be other amino acids including Pro although not Arg or Lys, and Yaa may be Pro. Amino acid amides and methyl esters are also readily hydrolyzed, but rates on arylamides are exceedingly low.. Its function is as follows. A secreted aminopeptidase. Acts on free N-terminal amino groups with a very strong preference for Leu in the first position. This is Aminopeptidase from Pseudomonas aeruginosa (strain UCBPP-PA14).